A 1161-amino-acid polypeptide reads, in one-letter code: Lethal(2) giant larvae protein (1161 aa).

Positions D15–Q86 are phospho-regulated basic and hydrophobic (PRBH) motif. WD repeat units follow at residues S39 to Q72, E82 to L128, V131 to I167, S189 to Y223, S231 to P263, S278 to V320, V328 to L358, and T380 to K464. A phosphoserine mark is found at S473 and S484. 2 WD repeats span residues K513–L594 and T603–S664. S679 is subject to Phosphoserine. WD repeat units lie at residues V708 to Q778, G787 to I832, L837 to A927, and C941 to T964. Residues S808, S869, S876, S887, S889, and S893 each carry the phosphoserine modification. The residue at position 1013 (S1013) is a Phosphoserine. Residues E1141–F1161 form a disordered region.

The protein belongs to the WD repeat L(2)GL family. As to quaternary structure, may form multimeric complexes. Interacts with mahj. Interacts with aPKC; leading to phosphorylation. Interacts with ball. Post-translationally, phosphorylated by aPKC which lowers lipid affinity and promotes dissociation from the cell cortex. In developing oocytes, aPKC-mediated phosphorylation restricts activity to the oocyte posterior and is required for oocyte polarity formation. In terms of tissue distribution, expressed in the epithelial cells of the digestive tract and in gonads.

It localises to the cytoplasm. The protein localises to the cell cortex. Essential for the development of polarized epithelia, for cell polarity associated with asymmetric cell division of neuroblasts during development, and for oocyte polarity formation. Promotes the formation of actin-rich projections at the oocyte cortex and the posterior enrichment of par-1 which is required for oocyte polarization. Regulates the localization of axis-specifying morphogens such as stau and grk. Its function is as follows. Has an essential role in control of cell proliferation and differentiation during development and could act as a tumor suppressor. In terms of biological role, has an accessory function in control of cell proliferation and differentiation during development. In Drosophila melanogaster (Fruit fly), this protein is Lethal(2) giant larvae protein (l(2)gl).